The following is a 512-amino-acid chain: Probable pectinesterase/pectinesterase inhibitor 54 (512 aa).

The signal sequence occupies residues 1–24 (MGVIDMVLFWVLLVNALLIVDASS). The pectinesterase inhibitor 54 stretch occupies residues 29 to 193 (FAYQNEMQRH…SRLVSNSLTL (165 aa)). N-linked (GlcNAc...) asparagine glycosylation is found at Asn71 and Asn131. Positions 229–496 (HVVVAKDGSG…FSVVKRRNGE (268 aa)) are pectinesterase 54. A substrate-binding site is contributed by Gln302. Asp325 serves as the catalytic Proton donor; for pectinesterase activity. Cysteines 339 and 359 form a disulfide. Asp346 (nucleophile; for pectinesterase activity) is an active-site residue. Residues Arg415 and Trp417 each contribute to the substrate site.

It in the N-terminal section; belongs to the PMEI family. This sequence in the C-terminal section; belongs to the pectinesterase family. Expressed in siliques.

The protein localises to the secreted. It is found in the cell wall. It catalyses the reaction [(1-&gt;4)-alpha-D-galacturonosyl methyl ester](n) + n H2O = [(1-&gt;4)-alpha-D-galacturonosyl](n) + n methanol + n H(+). It functions in the pathway glycan metabolism; pectin degradation; 2-dehydro-3-deoxy-D-gluconate from pectin: step 1/5. Its function is as follows. Acts in the modification of cell walls via demethylesterification of cell wall pectin. This is Probable pectinesterase/pectinesterase inhibitor 54 (PME54) from Arabidopsis thaliana (Mouse-ear cress).